The primary structure comprises 125 residues: Small ribosomal subunit protein uS12 (125 aa).

The residue at position 89 (Asp89) is a 3-methylthioaspartic acid.

This sequence belongs to the universal ribosomal protein uS12 family. Part of the 30S ribosomal subunit. Contacts proteins S8 and S17. May interact with IF1 in the 30S initiation complex.

Functionally, with S4 and S5 plays an important role in translational accuracy. Interacts with and stabilizes bases of the 16S rRNA that are involved in tRNA selection in the A site and with the mRNA backbone. Located at the interface of the 30S and 50S subunits, it traverses the body of the 30S subunit contacting proteins on the other side and probably holding the rRNA structure together. The combined cluster of proteins S8, S12 and S17 appears to hold together the shoulder and platform of the 30S subunit. The protein is Small ribosomal subunit protein uS12 of Acidovorax sp. (strain JS42).